Consider the following 888-residue polypeptide: Alanine--tRNA ligase (888 aa).

The Zn(2+) site is built by His-573, His-577, Cys-676, and His-680.

Belongs to the class-II aminoacyl-tRNA synthetase family. It depends on Zn(2+) as a cofactor.

It localises to the cytoplasm. It catalyses the reaction tRNA(Ala) + L-alanine + ATP = L-alanyl-tRNA(Ala) + AMP + diphosphate. Its function is as follows. Catalyzes the attachment of alanine to tRNA(Ala) in a two-step reaction: alanine is first activated by ATP to form Ala-AMP and then transferred to the acceptor end of tRNA(Ala). Also edits incorrectly charged Ser-tRNA(Ala) and Gly-tRNA(Ala) via its editing domain. This chain is Alanine--tRNA ligase, found in Corynebacterium diphtheriae (strain ATCC 700971 / NCTC 13129 / Biotype gravis).